Here is a 652-residue protein sequence, read N- to C-terminus: DNA ligase (652 aa).

NAD(+) contacts are provided by residues 29–33, 78–79, and Glu107; these read DSDYD and SL. Lys109 functions as the N6-AMP-lysine intermediate in the catalytic mechanism. Residues Arg130, Glu164, Lys278, and Lys302 each contribute to the NAD(+) site. Residues Cys395, Cys398, Cys413, and Cys418 each contribute to the Zn(2+) site. One can recognise a BRCT domain in the interval 577–652; that stretch reads NSDAALFGLT…IEDEDWLRQL (76 aa).

Belongs to the NAD-dependent DNA ligase family. LigA subfamily. Mg(2+) is required as a cofactor. The cofactor is Mn(2+).

It catalyses the reaction NAD(+) + (deoxyribonucleotide)n-3'-hydroxyl + 5'-phospho-(deoxyribonucleotide)m = (deoxyribonucleotide)n+m + AMP + beta-nicotinamide D-nucleotide.. Functionally, DNA ligase that catalyzes the formation of phosphodiester linkages between 5'-phosphoryl and 3'-hydroxyl groups in double-stranded DNA using NAD as a coenzyme and as the energy source for the reaction. It is essential for DNA replication and repair of damaged DNA. The chain is DNA ligase from Streptococcus pyogenes serotype M12 (strain MGAS2096).